Here is a 416-residue protein sequence, read N- to C-terminus: DNA-guanine transglycosylase (416 aa).

Asp95 acts as the Proton acceptor in catalysis. The active-site Nucleophile is the Asp256. 4 residues coordinate Zn(2+): Cys368, Cys370, Cys373, and His395.

The protein belongs to the DNA-guanine transglycosylase family. Zn(2+) serves as cofactor.

Functionally, part of the dpd cluster involved in the insertion of 7-deazaguanine derivatives in DNA. DpdA may insert 7-cyano-7-deazaguanine (preQ0) into DNA with the help of DpdB. DpdA and dpdB are necessary and sufficient to synthesize 2'-deoxy-7-cyano-7-deazaguanosine (dPreQ0). The sequence is that of DNA-guanine transglycosylase from Salmonella montevideo.